Here is a 299-residue protein sequence, read N- to C-terminus: ATP phosphoribosyltransferase (299 aa).

This sequence belongs to the ATP phosphoribosyltransferase family. Long subfamily. In terms of assembly, equilibrium between an active dimeric form, an inactive hexameric form and higher aggregates. Interconversion between the various forms is largely reversible and is influenced by the natural substrates and inhibitors of the enzyme. It depends on Mg(2+) as a cofactor.

It is found in the cytoplasm. It catalyses the reaction 1-(5-phospho-beta-D-ribosyl)-ATP + diphosphate = 5-phospho-alpha-D-ribose 1-diphosphate + ATP. It functions in the pathway amino-acid biosynthesis; L-histidine biosynthesis; L-histidine from 5-phospho-alpha-D-ribose 1-diphosphate: step 1/9. Feedback inhibited by histidine. Its function is as follows. Catalyzes the condensation of ATP and 5-phosphoribose 1-diphosphate to form N'-(5'-phosphoribosyl)-ATP (PR-ATP). Has a crucial role in the pathway because the rate of histidine biosynthesis seems to be controlled primarily by regulation of HisG enzymatic activity. This Escherichia coli O81 (strain ED1a) protein is ATP phosphoribosyltransferase.